Here is a 936-residue protein sequence, read N- to C-terminus: MAGGDRGSGGTGNVRRLVIVESPTKARKIAGYLGSNYVVESSRGHIRDLPRNAADVPAKFKSEPWARLGVNVDQNFEPLYIVSPEKKSTVTELKGLLKDVDELYLATDGDREGEAIAWHLLETLKPRVPVKRMVFHEITEPAIRNAAENPRDLDIALVDAQETRRILDRLYGYEVSPVLWKKVAPKLSAGRVQSVATRIIVQRERERMAFHSASYWDVTAELDASVSDPSASPPKFTAKLNTVDGRRVATGRDFDSLGQLKRPDEVLVLDEASAGALASGLRGAQLAVTSVEQKPYTRRPYAPFMTSTLQQEAARKLRFSSERTMSIAQRLYENGYITYMRTDSTTLSESAINAARTQARQLYGEEYVHPSPRQYTRKVKNAQEAHEAIRPAGDVFQTPGQLHSALDTDEFRLYELIWQRTVASQMADARGTTLSLRIGGSASSGEQVVFNASGRTITFPGFLKAYVESIDELAGGESDDAESRLPNLTQGQRVDAADLSADGHQTSPPARYTEASLIKALEELGIGRPSTYSSIIKTIQDRGYVQKKGSALVPSWVAFAVVGLLEQHFGRLVDYDFTAAMEDELDEIANGQEQRTNWLNNFYFGGEHGVEGSIARAGGLKQLVGGNLEGIDAREVNSIKVFDDSEGRPVYVRVGRNGPYLERMVDDPDNPGEQKPQRANLKEDLTPDELTPELAEKLFATPQEGRSLGIDPETGHEIVAKDGRFGPYVTEVLPEPEDGGDDGTAGTPAKKGKKPTGPKPRTGSLFRSMDLETVTLEDALKLLSLPRVVGVDPTTNEEITAQNGRYGPYLKRGTDSRSLATEDQIFTITLDEALKIYAEPKRRGRQAASAPPLRELGNDPVSGKPMVIKDGRFGPYVTDGETNASLRKGDDVLTITDERASELLADRRARGPVKKKAPAKKAAKKAPAKKAAAKKA.

A Toprim domain is found at arginine 15 to threonine 139. Glutamate 21 and aspartate 108 together coordinate Mg(2+). Residues aspartate 154 to glutamate 611 form the Topo IA-type catalytic domain. The interval serine 188–glutamine 193 is interaction with DNA. Residue tyrosine 339 is the O-(5'-phospho-DNA)-tyrosine intermediate of the active site. Disordered regions lie at residues leucine 661–aspartate 688, valine 732–arginine 767, lysine 841–alanine 884, and leucine 903–alanine 936. Basic residues predominate over residues arginine 910–alanine 936.

The protein belongs to the type IA topoisomerase family. In terms of assembly, monomer. The cofactor is Mg(2+).

It carries out the reaction ATP-independent breakage of single-stranded DNA, followed by passage and rejoining.. Its function is as follows. Releases the supercoiling and torsional tension of DNA, which is introduced during the DNA replication and transcription, by transiently cleaving and rejoining one strand of the DNA duplex. Introduces a single-strand break via transesterification at a target site in duplex DNA. The scissile phosphodiester is attacked by the catalytic tyrosine of the enzyme, resulting in the formation of a DNA-(5'-phosphotyrosyl)-enzyme intermediate and the expulsion of a 3'-OH DNA strand. The free DNA strand then undergoes passage around the unbroken strand, thus removing DNA supercoils. Finally, in the religation step, the DNA 3'-OH attacks the covalent intermediate to expel the active-site tyrosine and restore the DNA phosphodiester backbone. Functionally, relaxes negatively (but not positively) supercoiled DNA, concatanates and knots circular ssDNA at 52 but not 37 degrees Celsius. Preferentially nicks supercoiled DNA at C(G/T)CTT, cutting between the TT residues, binds ss and dsDNA with the recognition site. This chain is DNA topoisomerase 1, found in Mycolicibacterium smegmatis (strain ATCC 700084 / mc(2)155) (Mycobacterium smegmatis).